The primary structure comprises 190 residues: Xanthine phosphoribosyltransferase (190 aa).

Residues Leu20 and Asn27 each contribute to the xanthine site. 5-phospho-alpha-D-ribose 1-diphosphate is bound at residue 129–133 (ASGSA). Lys157 contacts xanthine.

It belongs to the purine/pyrimidine phosphoribosyltransferase family. Xpt subfamily. Homodimer.

It is found in the cytoplasm. It carries out the reaction XMP + diphosphate = xanthine + 5-phospho-alpha-D-ribose 1-diphosphate. The protein operates within purine metabolism; XMP biosynthesis via salvage pathway; XMP from xanthine: step 1/1. Its function is as follows. Converts the preformed base xanthine, a product of nucleic acid breakdown, to xanthosine 5'-monophosphate (XMP), so it can be reused for RNA or DNA synthesis. The polypeptide is Xanthine phosphoribosyltransferase (Clostridium tetani (strain Massachusetts / E88)).